A 124-amino-acid chain; its full sequence is Large ribosomal subunit protein bL12 (124 aa).

This sequence belongs to the bacterial ribosomal protein bL12 family. Homodimer. Part of the ribosomal stalk of the 50S ribosomal subunit. Forms a multimeric L10(L12)X complex, where L10 forms an elongated spine to which 2 to 4 L12 dimers bind in a sequential fashion. Binds GTP-bound translation factors.

Functionally, forms part of the ribosomal stalk which helps the ribosome interact with GTP-bound translation factors. Is thus essential for accurate translation. The protein is Large ribosomal subunit protein bL12 of Anaeromyxobacter dehalogenans (strain 2CP-C).